Reading from the N-terminus, the 163-residue chain is Protein GOLVEN 3 (163 aa).

The signal sequence occupies residues 1–20 (MMRFTIIVIAFLLIIQSLEE). The propeptide occupies 21 to 141 (EHILVYAHEG…MEKLARLLRD (121 aa)). Tyr143 is subject to Sulfotyrosine. The disordered stretch occupies residues 144–163 (PIYSKPRRKPPVNNRAPDKF). Pro154 bears the Hydroxyproline mark. The propeptide occupies 158–163 (RAPDKF).

It belongs to the RGF family. As to quaternary structure, binds to LRR receptor-like serine/threonine-protein kinases RGI1, RGI2 and RGI3 to trigger their dimerization with SERK proteins and subsequent signaling. Expressed in roots, specifically in the root apical meristem (RAM).

It localises to the secreted. Signaling peptide (root growth factor) required during root gravitropism in a PIN2-traffic dependent manner, thus influencing the formation of auxin gradients. Maintains the postembryonic root stem cell niche. This Arabidopsis thaliana (Mouse-ear cress) protein is Protein GOLVEN 3.